Consider the following 173-residue polypeptide: MNDLRYPIGQFTYKRPITEEMIDTWIQEIEDLPNELTKAIKDLDQKQLDTPYRVGGWTVRQVVHHVVDSHMNSYIRFKLALTEKNPTIKPYKEEKWAELPDSKLPVDVSLVMLDSLHKRWVNLLYSLEIEDLEKTFNHPETGETKLAVAIGLYAWHGRHHTAHITSLRKRLNW.

Zn(2+)-binding residues include H65, H156, and H160.

The protein belongs to the metal hydrolase YfiT family. In terms of assembly, homodimer. Zn(2+) serves as cofactor.

The protein resides in the cytoplasm. Its function is as follows. Possible metal-dependent hydrolase. The polypeptide is Putative metal-dependent hydrolase BC_2708 (Bacillus cereus (strain ATCC 14579 / DSM 31 / CCUG 7414 / JCM 2152 / NBRC 15305 / NCIMB 9373 / NCTC 2599 / NRRL B-3711)).